The following is a 362-amino-acid chain: Anthranilate phosphoribosyltransferase (362 aa).

Residues G96, 99-100 (GD), T104, 106-109 (NIST), 124-132 (KHGNRAASS), and G136 contribute to the 5-phospho-alpha-D-ribose 1-diphosphate site. G96 contacts anthranilate. A Mg(2+)-binding site is contributed by S108. Position 127 (N127) interacts with anthranilate. Anthranilate is bound at residue R182. 2 residues coordinate Mg(2+): D240 and E241.

Belongs to the anthranilate phosphoribosyltransferase family. Homodimer. It depends on Mg(2+) as a cofactor.

The catalysed reaction is N-(5-phospho-beta-D-ribosyl)anthranilate + diphosphate = 5-phospho-alpha-D-ribose 1-diphosphate + anthranilate. The protein operates within amino-acid biosynthesis; L-tryptophan biosynthesis; L-tryptophan from chorismate: step 2/5. Catalyzes the transfer of the phosphoribosyl group of 5-phosphorylribose-1-pyrophosphate (PRPP) to anthranilate to yield N-(5'-phosphoribosyl)-anthranilate (PRA). In Rhodococcus jostii (strain RHA1), this protein is Anthranilate phosphoribosyltransferase.